A 577-amino-acid polypeptide reads, in one-letter code: Acyl-coenzyme A synthetase ACSM1, mitochondrial (577 aa).

The N-terminal 31 residues, 1 to 31 (MQWLMRFRTLWGIHKSFHNIHPAPSQLRCRS), are a transit peptide targeting the mitochondrion. An N6-succinyllysine modification is found at lysine 85. At lysine 146 the chain carries N6-acetyllysine; alternate. Residue lysine 146 is modified to N6-succinyllysine; alternate. Lysine 183 carries the N6-succinyllysine modification. N6-acetyllysine; alternate is present on lysine 204. The residue at position 204 (lysine 204) is an N6-succinyllysine; alternate. N6-acetyllysine is present on lysine 214. 226 to 234 (TSGTTGFPK) serves as a coordination point for ATP. Lysine 237 bears the N6-succinyllysine mark. Lysine 356 and lysine 391 each carry N6-acetyllysine; alternate. N6-succinyllysine; alternate occurs at positions 356 and 391. ATP is bound by residues aspartate 452 and arginine 467. At lysine 531 the chain carries N6-acetyllysine. Lysine 538 is modified (N6-acetyllysine; alternate). Lysine 538 is subject to N6-succinyllysine; alternate. N6-acetyllysine is present on lysine 549. Residue lysine 563 participates in ATP binding.

It belongs to the ATP-dependent AMP-binding enzyme family. Monomer. Mg(2+) serves as cofactor. The cofactor is Mn(2+).

It localises to the mitochondrion matrix. The protein localises to the mitochondrion. The enzyme catalyses a medium-chain fatty acid + ATP + CoA = a medium-chain fatty acyl-CoA + AMP + diphosphate. It carries out the reaction benzoate + ATP + CoA = benzoyl-CoA + AMP + diphosphate. It catalyses the reaction (R)-lipoate + GTP + H(+) = (R)-lipoyl-GMP + diphosphate. The catalysed reaction is octanoate + ATP + CoA = octanoyl-CoA + AMP + diphosphate. The enzyme catalyses decanoate + ATP + CoA = decanoyl-CoA + AMP + diphosphate. It carries out the reaction dodecanoate + ATP + CoA = dodecanoyl-CoA + AMP + diphosphate. It catalyses the reaction tetradecanoate + ATP + CoA = tetradecanoyl-CoA + AMP + diphosphate. The catalysed reaction is hexanoate + ATP + CoA = hexanoyl-CoA + AMP + diphosphate. The enzyme catalyses butanoate + ATP + CoA = butanoyl-CoA + AMP + diphosphate. It carries out the reaction hexadecanoate + ATP + CoA = hexadecanoyl-CoA + AMP + diphosphate. With respect to regulation, activated by monovalent cations, such as potassium, rubidium or ammonium. In terms of biological role, catalyzes the activation of fatty acids by CoA to produce an acyl-CoA, the first step in fatty acid metabolism. Capable of activating medium-chain fatty acids (e.g. butyric (C4) to decanoic (C10) acids), and certain carboxylate-containing xenobiotics, e.g. benzoate. Also catalyzes the activation of lipoate to lipoyl-nucleoside monophosphate. Activates lipoate with GTP at a 1000-fold higher rate than with ATP and activates both (R)- and (S)-lipoate to the respective lipoyl-GMP, with a preference for (R)-lipoate. The sequence is that of Acyl-coenzyme A synthetase ACSM1, mitochondrial (ACSM1) from Homo sapiens (Human).